A 270-amino-acid chain; its full sequence is MVNKLSNLIKEMRNRTNLGILECKKALLENNENIELAIQFIKKSGTLNIEKNVNNLSNGIVLAKVKKEKKYGALIELNSETDFVAKNKQFQNFGKEIISIILKEKISDIDILRKFMKEKISYFSLTFKEKINIKRIKLFYGKNLFNYIHLKRIGVIVDIKNSTEDMSKKIAMHIAASNPKYISVKSIPNIIKENEKMIYIKSALKNGKTKEIAEKISNGKMKKFFEKIALEEQFFIFDDTKKIKNIINERNIYIKKFIRFEVGENFYPVI.

Residues 81–84 (TDFV) are involved in Mg(2+) ion dislocation from EF-Tu.

It belongs to the EF-Ts family.

It localises to the cytoplasm. In terms of biological role, associates with the EF-Tu.GDP complex and induces the exchange of GDP to GTP. It remains bound to the aminoacyl-tRNA.EF-Tu.GTP complex up to the GTP hydrolysis stage on the ribosome. The polypeptide is Elongation factor Ts (Wigglesworthia glossinidia brevipalpis).